Consider the following 25-residue polypeptide: Caerin-1.19 (25 aa).

At L25 the chain carries Leucine amide.

This sequence belongs to the frog skin active peptide (FSAP) family. Caerin subfamily. Expressed by the skin dorsal glands.

It localises to the secreted. Its function is as follows. Caerin-1.19 shows significant activity against Gram-positive organisms, but is less effective against Gram-negative organisms. The chain is Caerin-1.19 from Ranoidea gracilenta (Dainty green tree frog).